We begin with the raw amino-acid sequence, 172 residues long: Adenine phosphoribosyltransferase (172 aa).

The protein belongs to the purine/pyrimidine phosphoribosyltransferase family. Homodimer.

Its subcellular location is the cytoplasm. It carries out the reaction AMP + diphosphate = 5-phospho-alpha-D-ribose 1-diphosphate + adenine. The protein operates within purine metabolism; AMP biosynthesis via salvage pathway; AMP from adenine: step 1/1. Functionally, catalyzes a salvage reaction resulting in the formation of AMP, that is energically less costly than de novo synthesis. In Prochlorococcus marinus (strain MIT 9211), this protein is Adenine phosphoribosyltransferase.